Here is a 483-residue protein sequence, read N- to C-terminus: Ribulose bisphosphate carboxylase large chain (483 aa).

Residues 1-2 constitute a propeptide that is removed on maturation; the sequence is MS. Asparagine 123 and threonine 173 together coordinate substrate. Lysine 175 acts as the Proton acceptor in catalysis. Lysine 177 is a substrate binding site. Mg(2+) is bound by residues lysine 201, aspartate 203, and glutamate 204. Residue lysine 201 is modified to N6-carboxylysine. Serine 208 is subject to Phosphoserine. The Proton acceptor role is filled by histidine 294. Arginine 295 and histidine 327 together coordinate substrate. Threonine 330 is modified (phosphothreonine). Serine 379 lines the substrate pocket.

This sequence belongs to the RuBisCO large chain family. Type I subfamily. In terms of assembly, heterohexadecamer of 8 large chains and 8 small chains; disulfide-linked. The disulfide link is formed within the large subunit homodimers. It depends on Mg(2+) as a cofactor. The disulfide bond which can form in the large chain dimeric partners within the hexadecamer appears to be associated with oxidative stress and protein turnover.

Its subcellular location is the plastid. The protein resides in the chloroplast. It catalyses the reaction 2 (2R)-3-phosphoglycerate + 2 H(+) = D-ribulose 1,5-bisphosphate + CO2 + H2O. The enzyme catalyses D-ribulose 1,5-bisphosphate + O2 = 2-phosphoglycolate + (2R)-3-phosphoglycerate + 2 H(+). RuBisCO catalyzes two reactions: the carboxylation of D-ribulose 1,5-bisphosphate, the primary event in carbon dioxide fixation, as well as the oxidative fragmentation of the pentose substrate in the photorespiration process. Both reactions occur simultaneously and in competition at the same active site. In Aethionema cordifolium (Lebanon stonecress), this protein is Ribulose bisphosphate carboxylase large chain.